The following is a 126-amino-acid chain: Large ribosomal subunit protein eL8 (126 aa).

This sequence belongs to the eukaryotic ribosomal protein eL8 family. As to quaternary structure, part of the 50S ribosomal subunit. Probably part of the RNase P complex.

It is found in the cytoplasm. Functionally, multifunctional RNA-binding protein that recognizes the K-turn motif in ribosomal RNA, the RNA component of RNase P, box H/ACA, box C/D and box C'/D' sRNAs. The polypeptide is Large ribosomal subunit protein eL8 (Cenarchaeum symbiosum (strain A)).